The following is a 258-amino-acid chain: Elongation factor Ts (258 aa).

Positions 81–84 (TDFV) are involved in Mg(2+) ion dislocation from EF-Tu. The tract at residues 216 to 258 (GLKPAEAPKVEETPPAPPEEPAPEPAPAAESKPAKKGSAKKKK) is disordered. Residues 229-241 (PPAPPEEPAPEPA) show a composition bias toward pro residues. Positions 249 to 258 (AKKGSAKKKK) are enriched in basic residues.

It belongs to the EF-Ts family.

Its subcellular location is the cytoplasm. Associates with the EF-Tu.GDP complex and induces the exchange of GDP to GTP. It remains bound to the aminoacyl-tRNA.EF-Tu.GTP complex up to the GTP hydrolysis stage on the ribosome. This Synechococcus sp. (strain JA-2-3B'a(2-13)) (Cyanobacteria bacterium Yellowstone B-Prime) protein is Elongation factor Ts.